Here is a 1137-residue protein sequence, read N- to C-terminus: Receptor-type guanylate cyclase gcy-1 (1137 aa).

A signal peptide spans 1 to 18 (MQIFTILLLFNIFPSIFV). Topologically, residues 19–494 (QNLPDTTVAP…CPVSFWEQYK (476 aa)) are extracellular. N-linked (GlcNAc...) asparagine glycans are attached at residues Asn-219, Asn-348, Asn-358, Asn-384, Asn-417, and Asn-451. The chain crosses the membrane as a helical span at residues 495-515 (ILIFVAIAVIVLMVLIMIIGC). The Cytoplasmic portion of the chain corresponds to 516–1137 (LCVISGKRAE…FKMDTLKVAN (622 aa)). The region spanning 557-826 (LQSAPSISTG…ENICSQMKGL (270 aa)) is the Protein kinase domain. Positions 840–871 (NMLEEYTSTLEEEIEERTKELTLEKKKADILL) form a coiled coil. In terms of domain architecture, Guanylate cyclase spans 898–1028 (TVFFSDVVKF…DTVNTASRME (131 aa)). The interval 1086–1122 (ELRSISNRSTPPVTNDRWIPNPSSSHGSRPSSVYDPL) is disordered. Positions 1088-1098 (RSISNRSTPPV) are enriched in polar residues. Low complexity predominate over residues 1105-1117 (PNPSSSHGSRPSS).

This sequence belongs to the adenylyl cyclase class-4/guanylyl cyclase family. As to expression, expressed predominantly in sensory neurons. Expressed asymmetrically in the right ASE (ASER) neuron and bilaterally in ASI and URX neurons. Expressed in PVT and bilaterally in AIY non-sensory neurons. Expressed in intestine.

The protein localises to the membrane. It catalyses the reaction GTP = 3',5'-cyclic GMP + diphosphate. Functionally, guanylate cyclase involved in the production of the second messenger cGMP. Involved in the sensing of K+ gradient by the ASE right (ASER) sensory neuron. The chain is Receptor-type guanylate cyclase gcy-1 (gcy-1) from Caenorhabditis elegans.